A 440-amino-acid polypeptide reads, in one-letter code: MLEMSKRQSPRGAGLAPTIAWRVFQLLTLAGVLWVGWRLLGRVPYRIDIDVYRMGGRAWLDGRPLYADGAIFHTQGGLDLPFTYPPLAAIAFAPFAWLSLPLASSAITATTLVLLIVATTIVLTRLDVWPHTTVTSEPAWMRRAWLAAAMVAPAVIYLEPIRSNFEFGQINVVLMTLVIADCVPRRTPWPRGLLLGLAIALKLTPAVFLLYFLLRRDIHTLLRTAATAVVASLAGFALAWSDSVEYWTETVRNTDRIGTATLNTNQNIAGALARLGLGESPRFILWVLACFAVLALTVWAARRALRGDTADQTTEAPVLALVCVALFGLVVSPVSWSHHWVWMLPVLVVTAVLAYRRRSVWFTALTAAGLALTVWTPITLLPEHRETTASLWRQLAGGSYVWWAFAVIVVIGLVSSSRTHTGDAHETDEPLVPLARGEAG.

A run of 11 helical transmembrane segments spans residues 15–35, 87–107, 109–129, 144–161, 164–184, 193–213, 224–244, 281–301, 316–336, 360–380, and 395–415; these read LAPT…VLWV, LAAI…SSAI, ATTL…LDVW, AWLA…LEPI, NFEF…DCVP, LLLG…LYFL, TAAT…SDSV, PRFI…VWAA, APVL…PVSW, VWFT…PITL, and LAGG…GLVS. A disordered region spans residues 419 to 440; that stretch reads THTGDAHETDEPLVPLARGEAG.

The protein belongs to the glycosyltransferase 87 family.

The protein localises to the cell membrane. It participates in phospholipid metabolism; phosphatidylinositol metabolism. Its function is as follows. Responsible for the addition of alpha-(1-2) mannose branches to the linear mannan core on the biosynthetic pathway to mature Lipoarabinomannan (LAM). The chain is Polyprenol-phosphate-mannose-dependent alpha-(1-2)-phosphatidylinositol mannoside mannosyltransferase from Mycolicibacterium smegmatis (strain ATCC 700084 / mc(2)155) (Mycobacterium smegmatis).